The chain runs to 255 residues: Type III pantothenate kinase (255 aa).

6 to 13 (DVGNTNIV) lines the ATP pocket. Substrate contacts are provided by residues Y100 and 107–110 (GADR). D109 acts as the Proton acceptor in catalysis. D129 contacts K(+). T132 contacts ATP. T184 lines the substrate pocket.

This sequence belongs to the type III pantothenate kinase family. As to quaternary structure, homodimer. Requires NH4(+) as cofactor. It depends on K(+) as a cofactor.

The protein resides in the cytoplasm. It catalyses the reaction (R)-pantothenate + ATP = (R)-4'-phosphopantothenate + ADP + H(+). It participates in cofactor biosynthesis; coenzyme A biosynthesis; CoA from (R)-pantothenate: step 1/5. Catalyzes the phosphorylation of pantothenate (Pan), the first step in CoA biosynthesis. This is Type III pantothenate kinase from Caldanaerobacter subterraneus subsp. tengcongensis (strain DSM 15242 / JCM 11007 / NBRC 100824 / MB4) (Thermoanaerobacter tengcongensis).